A 427-amino-acid chain; its full sequence is 3-phosphoshikimate 1-carboxyvinyltransferase (427 aa).

3-phosphoshikimate contacts are provided by Lys-22, Ser-23, and Arg-27. A phosphoenolpyruvate-binding site is contributed by Lys-22. Phosphoenolpyruvate is bound by residues Gly-96 and Arg-124. Residues Ser-170, Ser-171, Gln-172, Ser-199, Asp-313, Asn-336, and Lys-340 each contribute to the 3-phosphoshikimate site. Gln-172 is a phosphoenolpyruvate binding site. Asp-313 functions as the Proton acceptor in the catalytic mechanism. The phosphoenolpyruvate site is built by Arg-344, Arg-386, and Lys-411.

Belongs to the EPSP synthase family. As to quaternary structure, monomer.

The protein resides in the cytoplasm. It carries out the reaction 3-phosphoshikimate + phosphoenolpyruvate = 5-O-(1-carboxyvinyl)-3-phosphoshikimate + phosphate. Its pathway is metabolic intermediate biosynthesis; chorismate biosynthesis; chorismate from D-erythrose 4-phosphate and phosphoenolpyruvate: step 6/7. Functionally, catalyzes the transfer of the enolpyruvyl moiety of phosphoenolpyruvate (PEP) to the 5-hydroxyl of shikimate-3-phosphate (S3P) to produce enolpyruvyl shikimate-3-phosphate and inorganic phosphate. In Aeromonas salmonicida, this protein is 3-phosphoshikimate 1-carboxyvinyltransferase.